The primary structure comprises 442 residues: 3-oxoacyl-[acyl-carrier-protein] synthase homolog (442 aa).

Positions 2 to 438 constitute a Ketosynthase family 3 (KS3) domain; sequence SRRVVITGLG…GVNTSLLFKK (437 aa). Catalysis depends on for beta-ketoacyl synthase activity residues Cys-187, His-322, and His-362.

It belongs to the thiolase-like superfamily. Beta-ketoacyl-ACP synthases family.

It is found in the mitochondrion. The catalysed reaction is a fatty acyl-[ACP] + malonyl-[ACP] + H(+) = a 3-oxoacyl-[ACP] + holo-[ACP] + CO2. Possibly involved in the synthesis of a specialized molecule, probably related to a fatty acid, which is essential for mitochondrial respiration. Is essential for oxygen uptake and the presence of cytochromes A and B. In Saccharomyces cerevisiae (strain ATCC 204508 / S288c) (Baker's yeast), this protein is 3-oxoacyl-[acyl-carrier-protein] synthase homolog (CEM1).